Consider the following 474-residue polypeptide: Type I restriction enzyme EcoBI specificity subunit (474 aa).

Belongs to the type-I restriction system S methylase family. As to quaternary structure, the type I restriction/modification system is composed of three polypeptides R, M and S. The restriction enzyme has stoichiometry R(2)M(2)S(1) while the methyltransferase is M(2)S(1).

In terms of biological role, the specificity (S) subunit of a type I restriction enzyme; this subunit dictates DNA sequence specificity. The M and S subunits together form a methyltransferase (MTase) that methylates A-3 on the top strand and A-4 on the bottom strand of the sequence 5'-TGAN(8)TGCT-3'. In the presence of the R subunit the complex can also act as an endonuclease, binding to the same target sequence but cutting the DNA some distance from this site. Whether the DNA is cut or modified depends on the methylation state of the target sequence. When the target site is unmodified, the DNA is cut. When the target site is hemimethylated, the complex acts as a maintenance MTase modifying the DNA so that both strands become methylated. After locating a non-methylated recognition site, the enzyme complex serves as a molecular motor that translocates DNA in an ATP-dependent manner until a collision occurs that triggers cleavage. The sequence is that of Type I restriction enzyme EcoBI specificity subunit from Escherichia coli.